We begin with the raw amino-acid sequence, 567 residues long: TGF-beta receptor type-2 (567 aa).

An N-terminal signal peptide occupies residues Met1 to Thr23. Topologically, residues Ile24–Gln166 are extracellular. 6 disulfides stabilise this stretch: Cys51–Cys84, Cys54–Cys71, Cys61–Cys67, Cys77–Cys101, Cys121–Cys136, and Cys138–Cys143. Asn70 and Asn94 each carry an N-linked (GlcNAc...) asparagine glycan. The chain crosses the membrane as a helical span at residues Val167–Tyr187. Topologically, residues Cys188 to Lys567 are cytoplasmic. In terms of domain architecture, Protein kinase spans Ile244–Arg546. Residues Val250–Val258 and Lys277 contribute to the ATP site. Asp379 functions as the Proton acceptor in the catalytic mechanism. 3 positions are modified to phosphoserine: Ser409, Ser548, and Ser553. The tract at residues Arg546 to Lys567 is disordered.

It belongs to the protein kinase superfamily. TKL Ser/Thr protein kinase family. TGFB receptor subfamily. Homodimer. Heterohexamer; TGFB1, TGFB2 and TGFB3 homodimeric ligands assemble a functional receptor composed of two TGFBR1 and TGFBR2 heterodimers to form a ligand-receptor heterohexamer. The respective affinity of TGFRB1 and TGFRB2 for the ligands may modulate the kinetics of assembly of the receptor and may explain the different biological activities of TGFB1, TGFB2 and TGFB3. Component of a complex composed of TSC22D1 (via N-terminus), TGFBR1 and TGFBR2; the interaction between TSC22D1 and TGFBR1 is inhibited by SMAD7 and promoted by TGFB1. Interacts with DAXX. Interacts with DYNLT4. Interacts with ZFYVE9; ZFYVE9 recruits SMAD2 and SMAD3 to the TGF-beta receptor. Interacts with and is activated by SCUBE3; this interaction does not affect TGFB1-binding to TGFBR2. Interacts with VPS39; this interaction is independent of the receptor kinase activity and of the presence of TGF-beta. Interacts with CLU. Mg(2+) is required as a cofactor. It depends on Mn(2+) as a cofactor. Phosphorylated on a Ser/Thr residue in the cytoplasmic domain.

It is found in the cell membrane. Its subcellular location is the membrane raft. It catalyses the reaction L-threonyl-[receptor-protein] + ATP = O-phospho-L-threonyl-[receptor-protein] + ADP + H(+). The enzyme catalyses L-seryl-[receptor-protein] + ATP = O-phospho-L-seryl-[receptor-protein] + ADP + H(+). Functionally, transmembrane serine/threonine kinase forming with the TGF-beta type I serine/threonine kinase receptor, TGFBR1, the non-promiscuous receptor for the TGF-beta cytokines TGFB1, TGFB2 and TGFB3. Transduces the TGFB1, TGFB2 and TGFB3 signal from the cell surface to the cytoplasm and is thus regulating a plethora of physiological and pathological processes including cell cycle arrest in epithelial and hematopoietic cells, control of mesenchymal cell proliferation and differentiation, wound healing, extracellular matrix production, immunosuppression and carcinogenesis. The formation of the receptor complex composed of 2 TGFBR1 and 2 TGFBR2 molecules symmetrically bound to the cytokine dimer results in the phosphorylation and the activation of TGFRB1 by the constitutively active TGFBR2. Activated TGFBR1 phosphorylates SMAD2 which dissociates from the receptor and interacts with SMAD4. The SMAD2-SMAD4 complex is subsequently translocated to the nucleus where it modulates the transcription of the TGF-beta-regulated genes. This constitutes the canonical SMAD-dependent TGF-beta signaling cascade. Also involved in non-canonical, SMAD-independent TGF-beta signaling pathways. The polypeptide is TGF-beta receptor type-2 (Tgfbr2) (Rattus norvegicus (Rat)).